The primary structure comprises 305 residues: Ribosomal RNA small subunit methyltransferase H (305 aa).

S-adenosyl-L-methionine is bound by residues 30–32 (GGH), Asp-49, Phe-74, Asp-96, and Gln-103.

The protein belongs to the methyltransferase superfamily. RsmH family.

The protein localises to the cytoplasm. It carries out the reaction cytidine(1402) in 16S rRNA + S-adenosyl-L-methionine = N(4)-methylcytidine(1402) in 16S rRNA + S-adenosyl-L-homocysteine + H(+). Functionally, specifically methylates the N4 position of cytidine in position 1402 (C1402) of 16S rRNA. In Francisella tularensis subsp. holarctica (strain LVS), this protein is Ribosomal RNA small subunit methyltransferase H.